Consider the following 1051-residue polypeptide: SWI/SNF-related matrix-associated actin-dependent regulator of chromatin subfamily A member 5 (1051 aa).

Positions 1–15 (MSSAVEPPPPPPPES) are enriched in pro residues. The tract at residues 1–81 (MSSAVEPPPP…IQEPDPTYEE (81 aa)) is disordered. Ser-2 carries the post-translational modification N-acetylserine. Over residues 24-38 (GAGGSSSGNKGGPEG) the composition is skewed to gly residues. A compositionally biased stretch (low complexity) spans 39 to 53 (GAAPAAPCAAGSGPA). Thr-55 carries the phosphothreonine modification. Residue Ser-65 is modified to Phosphoserine. The span at 68-81 (KQKEIQEPDPTYEE) shows a compositional bias: basic and acidic residues. Lys-82 participates in a covalent cross-link: Glycyl lysine isopeptide (Lys-Gly) (interchain with G-Cter in SUMO2). Thr-112 carries the phosphothreonine modification. Ser-115, Ser-136, and Ser-170 each carry phosphoserine. The Helicase ATP-binding domain occupies 191 to 356 (ISLYENGING…WSLLNFLLPD (166 aa)). 204 to 211 (DEMGLGKT) lines the ATP pocket. Residues 307–310 (DEAH) carry the DEAH box motif. Position 439 is an N6-acetyllysine (Lys-439). The Helicase C-terminal domain occupies 486–637 (VLDKLLPKLK…SIVIQQGRLV (152 aa)). Glycyl lysine isopeptide (Lys-Gly) (interchain with G-Cter in SUMO2) cross-links involve residues Lys-643, Lys-646, Lys-693, Lys-721, and Lys-734. Ser-754 is modified (phosphoserine). SANT domains lie at 839–891 (QGFT…ERCN) and 942–1006 (KGKN…LITL). Lys-965 is covalently cross-linked (Glycyl lysine isopeptide (Lys-Gly) (interchain with G-Cter in SUMO2)). The tract at residues 1014 to 1051 (LEEKEKAEKKKRGPKPSTQKRKMDGAPDGRGRKKKLKL) is disordered. The segment covering 1022-1033 (KKKRGPKPSTQK) has biased composition (basic residues). Positions 1034–1043 (RKMDGAPDGR) are enriched in basic and acidic residues.

It belongs to the SNF2/RAD54 helicase family. ISWI subfamily. In terms of assembly, component of the ACF-5 ISWI chromatin-remodeling complex (also called the ACF/WCRF complex) at least composed of SMARCA5/SNF2H and BAZ1A/ACF1, which regulates the spacing of histone octamers on the DNA template to facilitate access to DNA. Within the complex interacts with BAZ1A/ACF1; the interaction is direct and is required to slide nucleosomes from end to center positions on a DNA template in an ATP-dependent manner. Component of the CHRAC ISWI chromatin-remodeling complex at least composed of SMARCA5/SNF2H, BAZ1A/ACF1, CHRAC1 and POLE3; the complex preferentially binds DNA through the CHRAC1-POLE3 heterodimer and possesses ATP-dependent nucleosome-remodeling activity. Within the complex interacts with BAZ1A/ACF1; the interaction is direct and promotes the interaction with the POLE3-CHRAC1 heterodimer. Within the complex interacts with the POLE3-CHRAC1 heterodimer; the interaction is direct and enhances nucleosome sliding activity by the SMARCA5/SNF2H and BAZ1A/ACF1 interaction. Neither POLE3 nor CHRAC1 enhances nucleosome sliding activity of the ACF-5 ISWI chromatin remodeling complex. Component of the WICH-5 ISWI chromatin-remodeling complex (also called the WICH complex) at least composed of SMARCA5/SNF2H and BAZ1B/WSTF, which regulates the spacing of histone octamers on the DNA template to facilitate access to DNA. Within the complex interacts with BAZ1B/WSTF. Component of the NoRC-5 ISWI chromatin-remodeling complex (also called the NoRC chromatin-remodeling complex) at least composed of SMARCA5/SNF2H and BAZ2A/TIP5; the complex suppresses rDNA transcription by a combination of nucleosome remodeling, histone deacetylation, and DNA methylation. Within the complex interacts with BAZ2A/TIP5. Within the complex interacts with HDAC1. Component of the BRF-5 ISWI chromatin-remodeling complex at least composed of SMARCA5/SNF2H and BAZ2B. Within the complex interacts with BAZ2B. Component of the NURF-5 ISWI chromatin-remodeling complex at least composed of SMARCA5/SNF2H and BPTF. Within the complex interacts with BPFT. Component of the CERF-5 ISWI chromatin-remodeling complex at least composed of SMARCA5/SNF2H and CECR2. LUZP1 is detected as part of the CERF-5 complex in embryonic stem cells where it is involved in complex stabilization but is not detected in the complex in the testis. Component of the RSF-5 ISWI chromatin-remodeling complex (also called the RSF complex) at least composed of SMARCA5/SNF2H and RSF1. Within the complex interacts with RSF1. Interacts with the cohesin complex component RAD21; the interaction is direct. Interacts with the NuRD complex components HDAC2, RBBP4 and CHD4; the interactions are direct. Interacts with PCNA. Component of the B-WICH complex, at least composed of SMARCA5/SNF2H, BAZ1B/WSTF, SF3B1, DEK, MYO1C, ERCC6, MYBBP1A and DDX21 which positively regulates RNA polymerase III transcription. Interacts with MYO1C. Interacts with BEND3. Interacts with SIRT6; promoting recruitment to DNA damage sites. As to expression, ubiquitously expressed.

The protein localises to the nucleus. The protein resides in the chromosome. It catalyses the reaction ATP + H2O = ADP + phosphate + H(+). Functionally, ATPase that possesses intrinsic ATP-dependent nucleosome-remodeling activity. Catalytic subunit of ISWI chromatin-remodeling complexes, which form ordered nucleosome arrays on chromatin and facilitate access to DNA during DNA-templated processes such as DNA replication, transcription, and repair; this may require intact histone H4 tails. Within the ISWI chromatin-remodeling complexes, slides edge- and center-positioned histone octamers away from their original location on the DNA template. Catalytic activity and histone octamer sliding propensity is regulated and determined by components of the ISWI chromatin-remodeling complexes. The BAZ1A/ACF1-, BAZ1B/WSTF-, BAZ2A/TIP5- and BAZ2B-containing ISWI chromatin-remodeling complexes regulate the spacing of nucleosomes along the chromatin and have the ability to slide mononucleosomes to the center of a DNA template in an ATP-dependent manner. The CECR2- and RSF1-containing ISWI chromatin-remodeling complexes do not have the ability to slide mononucleosomes to the center of a DNA template. Binds to core histones together with RSF1, and is required for the assembly of regular nucleosome arrays by the RSF-5 ISWI chromatin-remodeling complex. Involved in DNA replication and together with BAZ1A/ACF1 is required for replication of pericentric heterochromatin in S-phase. Probably plays a role in repression of RNA polymerase I dependent transcription of the rDNA locus, through the recruitment of the SIN3/HDAC1 corepressor complex to the rDNA promoter. The WICH-5 ISWI chromatin-remodeling complex regulates the transcription of various genes, has a role in RNA polymerase I and RNA polymerase III transcription, mediates the histone H2AX phosphorylation at 'Tyr-142', and is involved in the maintenance of chromatin structures during DNA replication processes. Essential component of the NoRC-5 ISWI chromatin-remodeling complex, a complex that mediates silencing of a fraction of rDNA by recruiting histone-modifying enzymes and DNA methyltransferases, leading to heterochromatin formation and transcriptional silencing. Required for embryonic development and differentiation, and the proliferation of early blastocyst-derived stem cells. In Mus musculus (Mouse), this protein is SWI/SNF-related matrix-associated actin-dependent regulator of chromatin subfamily A member 5 (Smarca5).